We begin with the raw amino-acid sequence, 512 residues long: Cytochrome P450 4d1 (512 aa).

Residues Glu-316 and Cys-456 each contribute to the heme site.

Belongs to the cytochrome P450 family. Requires heme as cofactor.

The protein resides in the endoplasmic reticulum membrane. The protein localises to the microsome membrane. In terms of biological role, involved in the metabolism of insect hormones and in the breakdown of synthetic insecticides. This Drosophila simulans (Fruit fly) protein is Cytochrome P450 4d1 (Cyp4d1).